The following is a 157-amino-acid chain: 3-dehydroquinate dehydratase (157 aa).

The active-site Proton acceptor is the Tyr-24. Residues Asn-75, His-81, and Asp-88 each coordinate substrate. The active-site Proton donor is His-101. Substrate-binding positions include Leu-102–Ser-103 and Arg-112.

It belongs to the type-II 3-dehydroquinase family. As to quaternary structure, homododecamer.

The catalysed reaction is 3-dehydroquinate = 3-dehydroshikimate + H2O. The protein operates within metabolic intermediate biosynthesis; chorismate biosynthesis; chorismate from D-erythrose 4-phosphate and phosphoenolpyruvate: step 3/7. Catalyzes a trans-dehydration via an enolate intermediate. The polypeptide is 3-dehydroquinate dehydratase (Brucella melitensis biotype 1 (strain ATCC 23456 / CCUG 17765 / NCTC 10094 / 16M)).